A 610-amino-acid chain; its full sequence is Serine/threonine-protein kinase VRK1 (610 aa).

The Protein kinase domain maps to 32 to 384 (FIVGKQFATG…PRKRTTRKAV (353 aa)). Residues 38-46 (FATGGFGRI) and K61 contribute to the ATP site. Catalysis depends on D167, which acts as the Proton acceptor. Disordered regions lie at residues 317–476 (IQKT…NKVA), 498–530 (ISVA…VGEG), 544–577 (KKAK…KGRR), and 590–610 (ERLA…SSEV). The segment covering 352–373 (AVKEESDNKDNDEVEVKPEKKA) has biased composition (basic and acidic residues). The span at 388–397 (NDSDDNEEQY) shows a compositional bias: acidic residues. The span at 447–458 (TTPSSAASTSRS) shows a compositional bias: low complexity. Polar residues predominate over residues 465-474 (LTSSTASSNK). The segment covering 502 to 517 (SDKSPTTSTPSSSSGL) has biased composition (low complexity). Polar residues-rich tracts occupy residues 550–559 (SGISSATKAS) and 594–610 (SRQT…SSEV).

Belongs to the protein kinase superfamily. CK1 Ser/Thr protein kinase family. VRK subfamily. Post-translationally, autophosphorylates in vitro. In terms of tissue distribution, present in germ cells at all stages of progression from the mitotic zone to mature oocytes, but not in maturing spermatids (at the protein level). Expressed in the ventral nerve cord and vulva cells.

It is found in the nucleus. The protein resides in the cytoplasm. The protein localises to the cajal body. It catalyses the reaction L-seryl-[protein] + ATP = O-phospho-L-seryl-[protein] + ADP + H(+). It carries out the reaction L-threonyl-[protein] + ATP = O-phospho-L-threonyl-[protein] + ADP + H(+). Its function is as follows. Serine/threonine kinase that phosphorylates baf-1, thus regulating the association of baf-1 with chromatin and nuclear membrane proteins during nuclear envelope formation. May act through the egl-17 signaling pathway. Essential in hermaphrodites for formation of the vulva, uterus, and uterine seam cells and for development and maintenance of the somatic gonad and thus the germ line. Acts to prevent cep-1 from triggering an inappropriate cell cycle arrest, thereby promoting germ cell proliferation. Regulates anchor cell polarity and the timing of anchor cell invasion through the basement membranes separating vulval and somatic gonadal cells during the L3 larval stage. The chain is Serine/threonine-protein kinase VRK1 from Caenorhabditis elegans.